A 1250-amino-acid chain; its full sequence is Phospholipid-transporting ATPase IC (1250 aa).

Acidic residues-rich tracts occupy residues 1–13 (MDTDYESTYEDDS) and 24–40 (SDDETDDELDSPQTDEP). The segment at 1-52 (MDTDYESTYEDDSQVPNDDVVPYSDDETDDELDSPQTDEPEQNRRNVQAEQS) is disordered. Topologically, residues 1 to 133 (MDTDYESTYE…VLLILQTIPQ (133 aa)) are cytoplasmic. A helical membrane pass occupies residues 134 to 154 (ISTVTWSTTLIPLLLVLGITA). At 155–338 (IKDLVDDIAR…TKIDYLMNYM (184 aa)) the chain is on the exoplasmic loop side. The chain crosses the membrane as a helical span at residues 339 to 359 (VYTIFVLLILAAAGLAIGQTF). Topologically, residues 360–385 (WEAKLGAANVSWYLYDGNNYSPSYRG) are cytoplasmic. The chain crosses the membrane as a helical span at residues 386 to 406 (FLAFWGYIIVLNTMVPISLYV). Residues 407–956 (SVEVIRLGQS…KFLRYFFYKN (550 aa)) lie on the Exoplasmic loop side of the membrane. Asp-454 (4-aspartylphosphate intermediate) is an active-site residue. Residues Asp-454, Lys-455, Thr-456, Glu-553, Phe-594, Lys-617, Arg-650, Thr-730, Gly-731, Asp-732, Arg-865, and Lys-871 each contribute to the ATP site. Asp-454 provides a ligand contact to Mg(2+). Position 456 (Thr-456) interacts with Mg(2+). Asp-891 is a Mg(2+) binding site. ATP is bound by residues Asn-894 and Asp-895. Residue Asp-895 coordinates Mg(2+). The helical transmembrane segment at 957 to 977 (FSFTLVHFWYSFFNGFSAQTV) threads the bilayer. At 978–980 (YED) the chain is on the cytoplasmic side. A helical transmembrane segment spans residues 981–1001 (WFITLYNVLYSSLPVLLVGLL). Over 1002–1034 (DQDVSDKLSLAFPRLYVPGQKDLLFNYKKFFLS) the chain is Exoplasmic loop. Residues 1035–1055 (LFHGIVTSLIIFFIPYGAFLL) traverse the membrane as a helical segment. At 1056 to 1069 (TMGQDGEAPSDYQS) the chain is on the cytoplasmic side. A helical membrane pass occupies residues 1070-1090 (FAVTTATALVITVNFQIGLDT). At 1091-1092 (SY) the chain is on the exoplasmic loop side. The helical transmembrane segment at 1093-1113 (WTFVNAFSIFGSIAIYFGIMF) threads the bilayer. The Cytoplasmic portion of the chain corresponds to 1114–1117 (DLHS). A helical membrane pass occupies residues 1118–1138 (AGIHVLFPSMFIFTGAAPNAL). The Exoplasmic loop portion of the chain corresponds to 1139–1140 (RQ). A helical membrane pass occupies residues 1141 to 1161 (PYLWLTIILTVAFCLLPIVAL). At 1162-1250 (RFLAKTIWPS…AQITHFTPQT (89 aa)) the chain is on the cytoplasmic side.

This sequence belongs to the cation transport ATPase (P-type) (TC 3.A.3) family. Type IV subfamily. In terms of assembly, component of a P4-ATPase flippase complex which consists of a catalytic alpha subunit and an accessory beta subunit. The flippase ATP8B1:TMEM30A complex can form an intermediate phosphoenzyme in vitro. Also interacts with beta subunit TMEM30B. The cofactor is Mg(2+).

The protein resides in the cell membrane. It is found in the apical cell membrane. The protein localises to the cell projection. It localises to the stereocilium. Its subcellular location is the endoplasmic reticulum. The protein resides in the golgi apparatus. The enzyme catalyses ATP + H2O + phospholipidSide 1 = ADP + phosphate + phospholipidSide 2.. It catalyses the reaction a 1,2-diacyl-sn-glycero-3-phospho-L-serine(out) + ATP + H2O = a 1,2-diacyl-sn-glycero-3-phospho-L-serine(in) + ADP + phosphate + H(+). In terms of biological role, catalytic component of a P4-ATPase flippase complex which catalyzes the hydrolysis of ATP coupled to the transport of aminophospholipids from the outer to the inner leaflet of various membranes and ensures the maintenance of asymmetric distribution of phospholipids. Phospholipid translocation also seems to be implicated in vesicle formation and in uptake of lipid signaling molecules. May also participate in the establishment of the canalicular membrane integrity by ensuring asymmetric distribution of phospholipids in the canicular membrane. In Xenopus tropicalis (Western clawed frog), this protein is Phospholipid-transporting ATPase IC (atp8b1).